A 284-amino-acid polypeptide reads, in one-letter code: 3-methyl-2-oxobutanoate hydroxymethyltransferase (284 aa).

The Mg(2+) site is built by Asp44 and Asp83. Residues 44-45 (DS), Asp83, and Lys112 each bind 3-methyl-2-oxobutanoate. A Mg(2+)-binding site is contributed by Glu114. The active-site Proton acceptor is Glu181.

The protein belongs to the PanB family. In terms of assembly, homodecamer; pentamer of dimers. Mg(2+) serves as cofactor.

It localises to the cytoplasm. The catalysed reaction is 3-methyl-2-oxobutanoate + (6R)-5,10-methylene-5,6,7,8-tetrahydrofolate + H2O = 2-dehydropantoate + (6S)-5,6,7,8-tetrahydrofolate. It functions in the pathway cofactor biosynthesis; coenzyme A biosynthesis. With respect to regulation, neither activated nor inhibited by coenzyme A. Catalyzes the reversible reaction in which hydroxymethyl group from 5,10-methylenetetrahydrofolate is transferred onto alpha-ketoisovalerate to form ketopantoate. The chain is 3-methyl-2-oxobutanoate hydroxymethyltransferase from Thermococcus kodakarensis (strain ATCC BAA-918 / JCM 12380 / KOD1) (Pyrococcus kodakaraensis (strain KOD1)).